The chain runs to 165 residues: Lipoprotein signal peptidase (165 aa).

Helical transmembrane passes span 9-29 (PFLW…LAVV), 65-85 (WQKY…LFFL), and 97-119 (TGYA…HGFV). Active-site residues include Asp-121 and Asp-139. The helical transmembrane segment at 134–154 (VFNIADVAICIGAGLLAIDAF) threads the bilayer.

This sequence belongs to the peptidase A8 family.

The protein resides in the cell inner membrane. It carries out the reaction Release of signal peptides from bacterial membrane prolipoproteins. Hydrolyzes -Xaa-Yaa-Zaa-|-(S,diacylglyceryl)Cys-, in which Xaa is hydrophobic (preferably Leu), and Yaa (Ala or Ser) and Zaa (Gly or Ala) have small, neutral side chains.. It participates in protein modification; lipoprotein biosynthesis (signal peptide cleavage). This protein specifically catalyzes the removal of signal peptides from prolipoproteins. This chain is Lipoprotein signal peptidase, found in Histophilus somni (strain 129Pt) (Haemophilus somnus).